Reading from the N-terminus, the 206-residue chain is Large ribosomal subunit protein uL4 (206 aa).

Positions Q66–A77 are enriched in basic residues. Residues Q66–H96 are disordered.

This sequence belongs to the universal ribosomal protein uL4 family. As to quaternary structure, part of the 50S ribosomal subunit.

Its function is as follows. One of the primary rRNA binding proteins, this protein initially binds near the 5'-end of the 23S rRNA. It is important during the early stages of 50S assembly. It makes multiple contacts with different domains of the 23S rRNA in the assembled 50S subunit and ribosome. In terms of biological role, forms part of the polypeptide exit tunnel. The protein is Large ribosomal subunit protein uL4 of Brucella anthropi (strain ATCC 49188 / DSM 6882 / CCUG 24695 / JCM 21032 / LMG 3331 / NBRC 15819 / NCTC 12168 / Alc 37) (Ochrobactrum anthropi).